The chain runs to 877 residues: Oligopeptide transporter 2 (877 aa).

The Cytoplasmic portion of the chain corresponds to 1–167 (MSETVKDKVI…DPTIPVETFR (167 aa)). A helical membrane pass occupies residues 168–188 (AYFLAIIWSVIGSGFNEFFSH). Position 189 (Arg189) is a topological domain, extracellular. Residues 190–210 (VVSISLNTPIIQMFLYICGKA) form a helical membrane-spanning segment. Topologically, residues 211 to 240 (WAKTIPCWTITIRGRKYGINIDKPWTQKEQ) are cytoplasmic. A helical transmembrane segment spans residues 241-261 (MFSTLLYAICQGAFYTHYNIL). At 262-272 (TQKLFYHSAFS) the chain is on the extracellular side. Residues 273–293 (FGYQFLLSLSVQFIGFGFAGI) form a helical membrane-spanning segment. Over 294–334 (LRKFVVYPARALWPTVMPTIAINKALLGKEKHESGMSRYKF) the chain is Cytoplasmic. Residues 335–355 (FFLTFFIMFIYNWFPTYIINI) traverse the membrane as a helical segment. The Extracellular segment spans residues 356–374 (LNTFNWMTWIKPSNINLAN). The N-linked (GlcNAc...) asparagine glycan is linked to Asn374. Residues 375–395 (ITGGVTGLGINPISSFDWNVI) form a helical membrane-spanning segment. Residues 396–404 (SFNSPLVYP) lie on the Cytoplasmic side of the membrane. Residues 405-425 (FWSYLTQYLGCILAALIVIAV) form a helical membrane-spanning segment. Over 426–480 (YYSNYMSCQYLPIFTNSLYTNTGHSFKVTEVLDSDNKLDVKKYQSYSPPYYSAGN) the chain is Extracellular. Residues 481–501 (LVSYGAFICAYPLMITWSFIV) form a helical membrane-spanning segment. Residues 502–553 (HSKLLFNAFKDWALNLWAMRKLKSWVTMFKSDYRALDDYDDPHSNAMKNYKE) lie on the Cytoplasmic side of the membrane. A helical membrane pass occupies residues 554-574 (VPDWWYFAILIGSLVVGIAVV). Over 575 to 582 (EHYPTNTP) the chain is Extracellular. The chain crosses the membrane as a helical span at residues 583 to 603 (VWGLFVCLGFNFVFLIPTTIL). Residues 604-614 (QATTGYSFGLN) lie on the Cytoplasmic side of the membrane. A helical transmembrane segment spans residues 615-635 (LLIEMVMGYALPGNPIAIMIL). Topologically, residues 636–671 (KAFGYNIDGQADNYVSNLKIAHYCKIPPMALFRGQC) are extracellular. A helical membrane pass occupies residues 672–692 (VIVFIQIFVNLGVLNWQISNI). At 693 to 730 (KDFCTPHQNAKFTCPDAVTYYNASVVWGAIGPKRIFNY) the chain is on the cytoplasmic side. The helical transmembrane segment at 731–751 (IYPIFKWCWLIGACIGIFFGV) threads the bilayer. Over 752 to 766 (WKRWGKFYPRYFDPM) the chain is Extracellular. Residues 767–789 (LFVGGMLNMSPPYNLMYYTSGMI) traverse the membrane as a helical segment. Residues 790 to 811 (VSYISQYYMKRHHLNLWEKYNY) lie on the Cytoplasmic side of the membrane. Residues 812-832 (VLSAGFSTGLVLSAIIIFFAV) traverse the membrane as a helical segment. Residues 833-877 (QYKDTAFNWWGNTVPYAGADGVGYPLKNITDTANGYFGYAPGHYP) lie on the Extracellular side of the membrane. Asn860 is a glycosylation site (N-linked (GlcNAc...) asparagine).

The protein belongs to the oligopeptide OPT transporter family.

It is found in the membrane. Its function is as follows. Transports tetra- and pentapeptides. Does not transport glutathione. The polypeptide is Oligopeptide transporter 2 (OPT2) (Saccharomyces cerevisiae (strain ATCC 204508 / S288c) (Baker's yeast)).